We begin with the raw amino-acid sequence, 378 residues long: Probable cytochrome oxidase subunit 2 (378 aa).

Over 1–8 (MIDYEFLR) the chain is Cytoplasmic. The helical transmembrane segment at 9 to 28 (FIWWVLVIVLLIGFSVTDGF) threads the bilayer. Over 29–79 (DMGVTALLPVIGKKEVERRIMINTIAPHWDGNQVWLLTAGGAIFAAWPIVY) the chain is Periplasmic. The helical transmembrane segment at 80-99 (AVSFSGFYIALVLVLAALFL) threads the bilayer. Topologically, residues 100-122 (RPLGFEYRAKIDNPTWRSVWDWG) are cytoplasmic. Residues 123 to 142 (LFAGGFVPALVFGVAFGNLL) form a helical membrane-spanning segment. The Periplasmic segment spans residues 143 to 164 (QGVPFHFNELTQVTYTGSFFEL). The chain crosses the membrane as a helical span at residues 165-184 (LNPFALLCGVISLSMLVTHG). Residues 185–205 (ANWLQMKTTEALRDRARTVSQ) lie on the Cytoplasmic side of the membrane. The helical transmembrane segment at 206-224 (IGSIVTLIAFVLAGVWLYS) threads the bilayer. Over 225–261 (KDGYVVTSTIDHFAPSSPMNKEVAVETGAWFRNFNEM) the chain is Periplasmic. A helical membrane pass occupies residues 262–281 (PILWIFPALAVVAALLNAAF). The Cytoplasmic segment spans residues 282–291 (SKANRCGFAF). A helical transmembrane segment spans residues 292-311 (FFSALTMAGVIITAAVSMFP). Topologically, residues 312-335 (FVMPSSSHPEQSLLMWDSTSSELT) are periplasmic. The helical transmembrane segment at 336 to 355 (LTLMLIFAVVFVVIALAYTI) threads the bilayer. Topologically, residues 356-378 (WSYSKMFGRLDANFIDKNKHSLY) are cytoplasmic.

This sequence belongs to the cytochrome ubiquinol oxidase subunit 2 family. As to quaternary structure, heterodimer of subunits I and II.

The protein localises to the cell inner membrane. Probable cytochrome oxidase subunit. This is Probable cytochrome oxidase subunit 2 from Haemophilus influenzae (strain ATCC 51907 / DSM 11121 / KW20 / Rd).